Consider the following 255-residue polypeptide: tRNA pseudouridine synthase A (255 aa).

Catalysis depends on Asp52, which acts as the Nucleophile. Position 111 (Tyr111) interacts with substrate.

Belongs to the tRNA pseudouridine synthase TruA family. In terms of assembly, homodimer.

The catalysed reaction is uridine(38/39/40) in tRNA = pseudouridine(38/39/40) in tRNA. Its function is as follows. Formation of pseudouridine at positions 38, 39 and 40 in the anticodon stem and loop of transfer RNAs. This Cereibacter sphaeroides (strain ATCC 17023 / DSM 158 / JCM 6121 / CCUG 31486 / LMG 2827 / NBRC 12203 / NCIMB 8253 / ATH 2.4.1.) (Rhodobacter sphaeroides) protein is tRNA pseudouridine synthase A.